Consider the following 320-residue polypeptide: tRNA U34 carboxymethyltransferase (320 aa).

Residues Lys89, Trp103, Lys108, Gly128, 150-152, 179-180, Met194, Tyr198, and Arg313 contribute to the carboxy-S-adenosyl-L-methionine site; these read DPT and IE.

This sequence belongs to the class I-like SAM-binding methyltransferase superfamily. CmoB family. As to quaternary structure, homotetramer.

The enzyme catalyses carboxy-S-adenosyl-L-methionine + 5-hydroxyuridine(34) in tRNA = 5-carboxymethoxyuridine(34) in tRNA + S-adenosyl-L-homocysteine + H(+). Functionally, catalyzes carboxymethyl transfer from carboxy-S-adenosyl-L-methionine (Cx-SAM) to 5-hydroxyuridine (ho5U) to form 5-carboxymethoxyuridine (cmo5U) at position 34 in tRNAs. This is tRNA U34 carboxymethyltransferase from Actinobacillus pleuropneumoniae serotype 3 (strain JL03).